The primary structure comprises 350 residues: C-X-C chemokine receptor type 1 (350 aa).

The Extracellular segment spans residues 1–39 (MSNITDPQMWDFDDLNFTGMPPTDEGYSPCRLETETLNK). 2 N-linked (GlcNAc...) asparagine glycosylation sites follow: N3 and N16. A helical transmembrane segment spans residues 40 to 66 (YVVIITYALVFLLSLLGNSLVMLVILY). Over 67-75 (SRVGRSVTD) the chain is Cytoplasmic. The chain crosses the membrane as a helical span at residues 76–96 (VYLLNLALADLLFALTLPIWA). The Extracellular portion of the chain corresponds to 97 to 111 (ASKVNGWIFGTFLCK). A disulfide bridge connects residues C110 and C187. The helical transmembrane segment at 112-133 (VVSLLKEVNFYSGILLLACISV) threads the bilayer. Residues 134 to 154 (DRYLAIVHATRTLTQKRHLVK) lie on the Cytoplasmic side of the membrane. The helical transmembrane segment at 155-174 (FVCLGCWGLSMNLSLPFFLF) threads the bilayer. The Extracellular segment spans residues 175–199 (RQAYHPNNSSPVCYEVLGNDTAKWR). A helical transmembrane segment spans residues 200–220 (MVLRILPHTFGFIVPLFVMLF). The Cytoplasmic portion of the chain corresponds to 221-242 (CYGFTLRTLFKAHMGQKHRAMR). A helical membrane pass occupies residues 243-264 (VIFAVVLIFLLCWLPYNLVLLA). Residues 265–285 (DTLMRTQVIQESCERRNNIGR) are Extracellular-facing. The helical transmembrane segment at 286–308 (ALDATEILGFLHSCLNPIIYAFI) threads the bilayer. At 309-350 (GQNFRHGFLKILAMHGLVSKEFLARHRVTSYTSSSVNVSSNL) the chain is on the cytoplasmic side.

This sequence belongs to the G-protein coupled receptor 1 family. In terms of assembly, interacts with IL8. Interacts with GNAI2.

It localises to the cell membrane. Its function is as follows. Receptor to interleukin-8, which is a powerful neutrophils chemotactic factor. Binding of IL-8 to the receptor causes activation of neutrophils. This response is mediated via a G-protein that activates a phosphatidylinositol-calcium second messenger system. This is C-X-C chemokine receptor type 1 (CXCR1) from Pan troglodytes (Chimpanzee).